The chain runs to 223 residues: Ribose-5-phosphate isomerase A (223 aa).

Substrate contacts are provided by residues 26-29 (TGST), 82-85 (DGAD), and 95-98 (KGGG). Glutamate 104 (proton acceptor) is an active-site residue. Lysine 122 is a substrate binding site.

Belongs to the ribose 5-phosphate isomerase family. Homodimer.

It catalyses the reaction aldehydo-D-ribose 5-phosphate = D-ribulose 5-phosphate. It participates in carbohydrate degradation; pentose phosphate pathway; D-ribose 5-phosphate from D-ribulose 5-phosphate (non-oxidative stage): step 1/1. Functionally, catalyzes the reversible conversion of ribose-5-phosphate to ribulose 5-phosphate. This is Ribose-5-phosphate isomerase A from Streptococcus agalactiae serotype V (strain ATCC BAA-611 / 2603 V/R).